The sequence spans 549 residues: Oxygen-dependent choline dehydrogenase (549 aa).

Residue 4-33 participates in FAD binding; it reads DFVIIGSGSAGSALAYRLSEDGKNSVLVIE. His-465 functions as the Proton acceptor in the catalytic mechanism. The interval 530–549 is disordered; the sequence is PLARSNQEPWINPRAAVSDR.

The protein belongs to the GMC oxidoreductase family. The cofactor is FAD.

The enzyme catalyses choline + A = betaine aldehyde + AH2. It catalyses the reaction betaine aldehyde + NAD(+) + H2O = glycine betaine + NADH + 2 H(+). It functions in the pathway amine and polyamine biosynthesis; betaine biosynthesis via choline pathway; betaine aldehyde from choline (cytochrome c reductase route): step 1/1. Involved in the biosynthesis of the osmoprotectant glycine betaine. Catalyzes the oxidation of choline to betaine aldehyde and betaine aldehyde to glycine betaine at the same rate. The sequence is that of Oxygen-dependent choline dehydrogenase from Rhizobium etli (strain ATCC 51251 / DSM 11541 / JCM 21823 / NBRC 15573 / CFN 42).